We begin with the raw amino-acid sequence, 520 residues long: Arginine biosynthesis bifunctional protein ArgJ, chloroplastic (520 aa).

6 residues coordinate substrate: Thr264, Lys290, Thr301, Glu388, Asn515, and Thr520. The Nucleophile role is filled by Thr301.

This sequence belongs to the ArgJ family. Heterodimer of an alpha and a beta chain.

The protein resides in the plastid. Its subcellular location is the chloroplast. It carries out the reaction N(2)-acetyl-L-ornithine + L-glutamate = N-acetyl-L-glutamate + L-ornithine. It catalyses the reaction L-glutamate + acetyl-CoA = N-acetyl-L-glutamate + CoA + H(+). It participates in amino-acid biosynthesis; L-arginine biosynthesis; L-ornithine and N-acetyl-L-glutamate from L-glutamate and N(2)-acetyl-L-ornithine (cyclic): step 1/1. Its pathway is amino-acid biosynthesis; L-arginine biosynthesis; N(2)-acetyl-L-ornithine from L-glutamate: step 1/4. Functionally, catalyzes two activities which are involved in the cyclic version of arginine biosynthesis: the synthesis of acetylglutamate from glutamate and acetyl-CoA, and of ornithine by transacetylation between acetylornithine and glutamate. This is Arginine biosynthesis bifunctional protein ArgJ, chloroplastic from Physcomitrium patens (Spreading-leaved earth moss).